The following is a 564-amino-acid chain: Urease subunit alpha (564 aa).

The Urease domain maps to 126–564 (GGIDTHIHFI…LPMAQRYFLF (439 aa)). Ni(2+)-binding residues include H131, H133, and K214. Position 214 is an N6-carboxylysine (K214). Substrate is bound at residue H216. Residues H243 and H269 each coordinate Ni(2+). Residue H317 is the Proton donor of the active site. Residue D357 participates in Ni(2+) binding.

This sequence belongs to the metallo-dependent hydrolases superfamily. Urease alpha subunit family. Heterotrimer of UreA (gamma), UreB (beta) and UreC (alpha) subunits. Three heterotrimers associate to form the active enzyme. The cofactor is Ni cation. In terms of processing, carboxylation allows a single lysine to coordinate two nickel ions.

The protein localises to the cytoplasm. It catalyses the reaction urea + 2 H2O + H(+) = hydrogencarbonate + 2 NH4(+). Its pathway is nitrogen metabolism; urea degradation; CO(2) and NH(3) from urea (urease route): step 1/1. This is Urease subunit alpha from Burkholderia pseudomallei (strain 1710b).